A 349-amino-acid polypeptide reads, in one-letter code: Terpene cyclase rstn5 (349 aa).

Helical transmembrane passes span 4-24, 81-101, 116-136, 158-178, and 181-201; these read LTPLIFLSLAMAAAVGVWGVF, FMVQFLANVAVIPVILNTEGA, GLFSQMATSAVMCPLYGFWFV, VVPSSVLIGYGIPALLSFDPF, and GLDLQIRGILAFTLYPLCISL. An N-linked (GlcNAc...) asparagine glycan is attached at Asn-222. 3 consecutive transmembrane segments (helical) span residues 228–248, 271–291, and 309–329; these read VAVGVVGMVSHLWYLGTGLTG, LVLLFLQIDYVITFAAMLLLA, and TLAVGWLFLGPGATLAAAWAL.

Belongs to the membrane-bound ascI terpene cyclase family.

The protein localises to the membrane. Its pathway is antifungal biosynthesis. Cyclase; part of the gene cluster that mediates the biosynthesis of the tetrahydropyranyl antifungal agent restricticin that acts as an inhibitor of CYP51 and blocks the ergosterol biosynthesis. The highly reducing polyketide synthase rstn3, the short chain dehydrogenase rstn4, the cyclase rstn5, the FAD-dependent monooxygenase rstn6 and the enoylreductase rstn7 are required to generate the first stable intermediate desmethylrestrictinol. Rstn3 with rstn7 biosynthesize the first polyketide chain intermediate that is reduced by rstn4, followed by epoxidation by rstn6 before 6-endo cyclization via epoxide opening by rstn5 leads to desmethylrestrictinol. The methyltransferase rstn1 then catalyzes the C4 O-methylation of desmethylrestrictinol to produce restrictinol, and the nonribosomal peptide synthetase rstn8 catalyzes the C3 esterification of restrictinol with glycine that leads to restricticin. This Aspergillus nomiae NRRL (strain ATCC 15546 / NRRL 13137 / CBS 260.88 / M93) protein is Terpene cyclase rstn5.